The sequence spans 160 residues: SsrA-binding protein (160 aa).

This sequence belongs to the SmpB family.

It is found in the cytoplasm. In terms of biological role, required for rescue of stalled ribosomes mediated by trans-translation. Binds to transfer-messenger RNA (tmRNA), required for stable association of tmRNA with ribosomes. tmRNA and SmpB together mimic tRNA shape, replacing the anticodon stem-loop with SmpB. tmRNA is encoded by the ssrA gene; the 2 termini fold to resemble tRNA(Ala) and it encodes a 'tag peptide', a short internal open reading frame. During trans-translation Ala-aminoacylated tmRNA acts like a tRNA, entering the A-site of stalled ribosomes, displacing the stalled mRNA. The ribosome then switches to translate the ORF on the tmRNA; the nascent peptide is terminated with the 'tag peptide' encoded by the tmRNA and targeted for degradation. The ribosome is freed to recommence translation, which seems to be the essential function of trans-translation. The sequence is that of SsrA-binding protein from Escherichia coli O139:H28 (strain E24377A / ETEC).